Consider the following 277-residue polypeptide: Large ribosomal subunit protein uL2 (277 aa).

2 disordered regions span residues lysine 32–glycine 58 and valine 225–lysine 277. The span at tyrosine 258–lysine 277 shows a compositional bias: basic residues.

It belongs to the universal ribosomal protein uL2 family. As to quaternary structure, part of the 50S ribosomal subunit. Forms a bridge to the 30S subunit in the 70S ribosome.

In terms of biological role, one of the primary rRNA binding proteins. Required for association of the 30S and 50S subunits to form the 70S ribosome, for tRNA binding and peptide bond formation. It has been suggested to have peptidyltransferase activity; this is somewhat controversial. Makes several contacts with the 16S rRNA in the 70S ribosome. The protein is Large ribosomal subunit protein uL2 of Borreliella afzelii (strain PKo) (Borrelia afzelii).